We begin with the raw amino-acid sequence, 68 residues long: MPQLNTTTWLTIITPTLLALFLITQLKLLNSHLHPPTPPKFTKTKPHAKPWELKWTKIYSPHSLPPQY.

The helical transmembrane segment at 8–24 (TWLTIITPTLLALFLIT) threads the bilayer. Lys54 bears the N6-acetyllysine; alternate mark. Residue Lys54 is modified to N6-succinyllysine; alternate. Lys57 is modified (N6-acetyllysine).

It belongs to the ATPase protein 8 family. In terms of assembly, F-type ATPases have 2 components, CF(1) - the catalytic core - and CF(0) - the membrane proton channel. Component of an ATP synthase complex composed of ATP5PB, ATP5MC1, ATP5F1E, ATP5PD, ATP5ME, ATP5PF, ATP5MF, MT-ATP6, MT-ATP8, ATP5F1A, ATP5F1B, ATP5F1D, ATP5F1C, ATP5PO, ATP5MG, ATP5MK and ATP5MJ. Interacts with PRICKLE3.

Its subcellular location is the mitochondrion membrane. In terms of biological role, mitochondrial membrane ATP synthase (F(1)F(0) ATP synthase or Complex V) produces ATP from ADP in the presence of a proton gradient across the membrane which is generated by electron transport complexes of the respiratory chain. F-type ATPases consist of two structural domains, F(1) - containing the extramembraneous catalytic core and F(0) - containing the membrane proton channel, linked together by a central stalk and a peripheral stalk. During catalysis, ATP synthesis in the catalytic domain of F(1) is coupled via a rotary mechanism of the central stalk subunits to proton translocation. Part of the complex F(0) domain. Minor subunit located with subunit a in the membrane. The chain is ATP synthase protein 8 (MT-ATP8) from Pongo pygmaeus (Bornean orangutan).